The following is a 252-amino-acid chain: MEKTLWTWTLLAVFSLLVVKGMSDGLDLADALGDDDDDEPTTKPPKADPGAGGAGGAAVKPTLKPVKPTVKEPAKPKPKQTGLDDFDLADALNPDNDIKGKGKDSGKGDKEVGGGSRDDGTPNSRGSQFSDDDLLDVGNDNSYKPDKGKGGKGGSSSNVGDLDPADDNNYDTMAETGTIAGIVSAVAMALVGAVSSYISYQKKKLCFSIQQSLNADMVKADAPDAVVAQEPQVQQTLLQPPNAEPPTEENAV.

An N-terminal signal peptide occupies residues 1–23 (MEKTLWTWTLLAVFSLLVVKGMS). Residues 30-170 (DALGDDDDDE…DLDPADDNNY (141 aa)) form a disordered region. Residues 57-68 (AAVKPTLKPVKP) show a composition bias toward low complexity. Positions 96-120 (NDIKGKGKDSGKGDKEVGGGSRDDG) are enriched in basic and acidic residues. A helical membrane pass occupies residues 178–198 (TIAGIVSAVAMALVGAVSSYI).

Belongs to the CD99 family.

It localises to the cell membrane. The protein localises to the cell junction. May function as a homophilic adhesion molecule. In Danio rerio (Zebrafish), this protein is CD99 antigen-like protein 2 (cd99l2).